The chain runs to 613 residues: Chitin synthase 8 (613 aa).

The disordered stretch occupies residues 1–73 (MAVSPTAKRK…PAPLTRPPPP (73 aa)). Residue N17 is glycosylated (N-linked (GlcNAc...) asparagine). Residues 18 to 27 (LSRQSSSART) show a composition bias toward polar residues. Over residues 61–73 (ESPPAPLTRPPPP) the composition is skewed to pro residues. The next 2 helical transmembrane spans lie at 119–139 (YSLI…LWNY) and 142–162 (YWYI…IFAI). N-linked (GlcNAc...) asparagine glycosylation is found at N312, N421, and N471. 2 helical membrane passes run 556–576 (VTTW…AIAL) and 583–602 (IFEN…RYAA).

Belongs to the chitin synthase family.

Its subcellular location is the cell membrane. The catalysed reaction is [(1-&gt;4)-N-acetyl-beta-D-glucosaminyl](n) + UDP-N-acetyl-alpha-D-glucosamine = [(1-&gt;4)-N-acetyl-beta-D-glucosaminyl](n+1) + UDP + H(+). Polymerizes chitin, a structural polymer of the cell wall and septum, by transferring the sugar moiety of UDP-GlcNAc to the non-reducing end of the growing chitin polymer. Plays a role in cell wall integrity. Plays a key role in pathogenicity. Likely contributes to post-penetration virulence. This Verticillium dahliae (strain VdLs.17 / ATCC MYA-4575 / FGSC 10137) (Verticillium wilt) protein is Chitin synthase 8.